Consider the following 427-residue polypeptide: Methylenetetrahydrofolate--tRNA-(uracil-5-)-methyltransferase TrmFO (427 aa).

8-13 (GAGISG) lines the FAD pocket.

This sequence belongs to the MnmG family. TrmFO subfamily. Requires FAD as cofactor.

Its subcellular location is the cytoplasm. It catalyses the reaction uridine(54) in tRNA + (6R)-5,10-methylene-5,6,7,8-tetrahydrofolate + NADH + H(+) = 5-methyluridine(54) in tRNA + (6S)-5,6,7,8-tetrahydrofolate + NAD(+). The enzyme catalyses uridine(54) in tRNA + (6R)-5,10-methylene-5,6,7,8-tetrahydrofolate + NADPH + H(+) = 5-methyluridine(54) in tRNA + (6S)-5,6,7,8-tetrahydrofolate + NADP(+). In terms of biological role, catalyzes the folate-dependent formation of 5-methyl-uridine at position 54 (M-5-U54) in all tRNAs. The chain is Methylenetetrahydrofolate--tRNA-(uracil-5-)-methyltransferase TrmFO from Mycoplasmopsis agalactiae (strain NCTC 10123 / CIP 59.7 / PG2) (Mycoplasma agalactiae).